A 141-amino-acid polypeptide reads, in one-letter code: Lutropin subunit beta (141 aa).

An N-terminal signal peptide occupies residues 1–20 (MEMLQGLLLLLLLSMGGAWA). 6 disulfide bridges follow: cysteine 29/cysteine 77, cysteine 43/cysteine 92, cysteine 46/cysteine 130, cysteine 54/cysteine 108, cysteine 58/cysteine 110, and cysteine 113/cysteine 120. Residues asparagine 33 and asparagine 50 are each glycosylated (N-linked (GlcNAc...) asparagine).

Belongs to the glycoprotein hormones subunit beta family. In terms of assembly, heterodimer of a common alpha chain and a unique beta chain which confers biological specificity to thyrotropin, lutropin, follitropin and gonadotropin.

It localises to the secreted. Functionally, promotes spermatogenesis and ovulation by stimulating the testes and ovaries to synthesize steroids. This chain is Lutropin subunit beta (LHB), found in Gorilla gorilla gorilla (Western lowland gorilla).